Reading from the N-terminus, the 185-residue chain is Elongation factor P (185 aa).

This sequence belongs to the elongation factor P family.

It is found in the cytoplasm. The protein operates within protein biosynthesis; polypeptide chain elongation. In terms of biological role, involved in peptide bond synthesis. Stimulates efficient translation and peptide-bond synthesis on native or reconstituted 70S ribosomes in vitro. Probably functions indirectly by altering the affinity of the ribosome for aminoacyl-tRNA, thus increasing their reactivity as acceptors for peptidyl transferase. In Streptococcus pyogenes serotype M49 (strain NZ131), this protein is Elongation factor P.